A 531-amino-acid chain; its full sequence is Bifunctional protein TrpGD (531 aa).

Residues Asp-3–Pro-196 form the Glutamine amidotransferase type-1 domain. Residue Gly-57 to Gly-59 coordinates L-glutamine. Cys-84 (nucleophile; for GATase activity) is an active-site residue. Residues Gln-88 and Ser-134–Leu-135 contribute to the L-glutamine site. Residues His-170 and Glu-172 each act as for GATase activity in the active site. The anthranilate phosphoribosyltransferase stretch occupies residues Pro-202–Gly-531.

It in the C-terminal section; belongs to the anthranilate phosphoribosyltransferase family. As to quaternary structure, heterotetramer consisting of two non-identical subunits: a beta subunit (TrpG) and a large alpha subunit (TrpE).

The catalysed reaction is chorismate + L-glutamine = anthranilate + pyruvate + L-glutamate + H(+). It carries out the reaction N-(5-phospho-beta-D-ribosyl)anthranilate + diphosphate = 5-phospho-alpha-D-ribose 1-diphosphate + anthranilate. It participates in amino-acid biosynthesis; L-tryptophan biosynthesis; L-tryptophan from chorismate: step 1/5. The protein operates within amino-acid biosynthesis; L-tryptophan biosynthesis; L-tryptophan from chorismate: step 2/5. With respect to regulation, cooperatively feedback inhibited by tryptophan. Functionally, part of a heterotetrameric complex that catalyzes the two-step biosynthesis of anthranilate, an intermediate in the biosynthesis of L-tryptophan. In the first step, the glutamine-binding beta subunit (TrpG) of anthranilate synthase (AS) provides the glutamine amidotransferase activity which generates ammonia as a substrate that, along with chorismate, is used in the second step, catalyzed by the large alpha subunit of AS (TrpE) to produce anthranilate. In the absence of TrpG, TrpE can synthesize anthranilate directly from chorismate and high concentrations of ammonia. In addition to synthesizing anthranilate, it also catalyzes the second step of the pathway, the transfer of the phosphoribosyl group of 5-phosphorylribose-1-pyrophosphate (PRPP) to anthranilate. This chain is Bifunctional protein TrpGD (trpGD), found in Escherichia coli (strain K12).